The primary structure comprises 247 residues: Trypsin (247 aa).

An N-terminal signal peptide occupies residues 1-21 (LTTVISYFALVAFALVGVSYA). Residues 22–30 (TPKASINGR) constitute a propeptide, activation peptide. The Peptidase S1 domain maps to 31 to 247 (IVGGEMTDIS…QSNFPGVYGI (217 aa)). Cys61 and Cys77 are oxidised to a cystine. Active-site charge relay system residues include His76 and Asp120. 2 disulfides stabilise this stretch: Cys185–Cys201 and Cys212–Cys236. Residue Ser216 is the Charge relay system of the active site.

This sequence belongs to the peptidase S1 family. Midgut.

It localises to the secreted. Its subcellular location is the extracellular space. The catalysed reaction is Preferential cleavage: Arg-|-Xaa, Lys-|-Xaa.. In Simulium vittatum (Striped black fly), this protein is Trypsin.